Here is a 391-residue protein sequence, read N- to C-terminus: Phosphopentomutase (391 aa).

Mn(2+) is bound by residues Asp-12, Asp-285, His-290, Asp-326, His-327, and His-338.

It belongs to the phosphopentomutase family. Mn(2+) serves as cofactor.

It is found in the cytoplasm. The enzyme catalyses 2-deoxy-alpha-D-ribose 1-phosphate = 2-deoxy-D-ribose 5-phosphate. It carries out the reaction alpha-D-ribose 1-phosphate = D-ribose 5-phosphate. It participates in carbohydrate degradation; 2-deoxy-D-ribose 1-phosphate degradation; D-glyceraldehyde 3-phosphate and acetaldehyde from 2-deoxy-alpha-D-ribose 1-phosphate: step 1/2. In terms of biological role, isomerase that catalyzes the conversion of deoxy-ribose 1-phosphate (dRib-1-P) and ribose 1-phosphate (Rib-1-P) to deoxy-ribose 5-phosphate (dRib-5-P) and ribose 5-phosphate (Rib-5-P), respectively. The chain is Phosphopentomutase from Herpetosiphon aurantiacus (strain ATCC 23779 / DSM 785 / 114-95).